The primary structure comprises 313 residues: E3 ubiquitin-protein ligase SGIP1 (313 aa).

Positions 16–65 (REYSKEIPIDLLIEIFSRLSTGDIARCRCVSKIWSSVPRLRDFTELFLKI) constitute an F-box domain.

Interacts with SGS3 in cytoplasmic granules.

It localises to the cytoplasmic granule. It carries out the reaction S-ubiquitinyl-[E2 ubiquitin-conjugating enzyme]-L-cysteine + [acceptor protein]-L-lysine = [E2 ubiquitin-conjugating enzyme]-L-cysteine + N(6)-ubiquitinyl-[acceptor protein]-L-lysine.. The protein operates within protein degradation; proteasomal ubiquitin-dependent pathway. It participates in protein modification; protein ubiquitination. In terms of biological role, E3 ubiquitin-protein ligase which triggers the ubiquitination and subsequent degradation of SGS3 in response to heat. Involved in the mechanisms necessary for quick response to heat and subsequent heritable transgenerational memory of heat acclimation (global warming) such as early flowering and attenuated immunity; this process includes epigenetic regulation as well as post-transcriptional gene silencing (PTGS). In response to heat, HSFA2 is activated and promotes the expression of REF6 which in turn derepresses HSFA2, thus establishing an inheritable feedback loop able to trigger SGIP1 and subsequent SGIP1-mediated SGS3 degradation; this prevents the biosynthesis of trans-acting siRNA (tasiRNA) and leads to the release of HTT5, which drives early flowering but attenuates immunity. The sequence is that of E3 ubiquitin-protein ligase SGIP1 from Arabidopsis thaliana (Mouse-ear cress).